We begin with the raw amino-acid sequence, 490 residues long: ATP synthase subunit beta, chloroplastic (490 aa).

Position 169–176 (169–176 (GGAGVGKT)) interacts with ATP.

Belongs to the ATPase alpha/beta chains family. F-type ATPases have 2 components, CF(1) - the catalytic core - and CF(0) - the membrane proton channel. CF(1) has five subunits: alpha(3), beta(3), gamma(1), delta(1), epsilon(1). CF(0) has four main subunits: a(1), b(1), b'(1) and c(9-12).

It is found in the plastid. Its subcellular location is the chloroplast thylakoid membrane. The enzyme catalyses ATP + H2O + 4 H(+)(in) = ADP + phosphate + 5 H(+)(out). Its function is as follows. Produces ATP from ADP in the presence of a proton gradient across the membrane. The catalytic sites are hosted primarily by the beta subunits. The chain is ATP synthase subunit beta, chloroplastic from Cyanidium caldarium (Red alga).